The primary structure comprises 187 residues: Threonylcarbamoyl-AMP synthase (187 aa).

The YrdC-like domain occupies 4 to 187; sequence TPDLDAAVAT…DARTGQILRD (184 aa).

This sequence belongs to the SUA5 family. TsaC subfamily.

Its subcellular location is the cytoplasm. It carries out the reaction L-threonine + hydrogencarbonate + ATP = L-threonylcarbamoyladenylate + diphosphate + H2O. Functionally, required for the formation of a threonylcarbamoyl group on adenosine at position 37 (t(6)A37) in tRNAs that read codons beginning with adenine. Catalyzes the conversion of L-threonine, HCO(3)(-)/CO(2) and ATP to give threonylcarbamoyl-AMP (TC-AMP) as the acyladenylate intermediate, with the release of diphosphate. This Xanthomonas campestris pv. campestris (strain 8004) protein is Threonylcarbamoyl-AMP synthase.